Consider the following 471-residue polypeptide: POU domain protein 2 (471 aa).

The span at 1-18 (CGKSYEEEEEEEDDELEA) shows a compositional bias: acidic residues. Disordered regions lie at residues 1 to 32 (CGKSYEEEEEEEDDELEADVAQNLSSKRSARQ) and 149 to 238 (DQQL…PKPL). The segment covering 165-180 (STPLSKSPLRSPSLSP) has biased composition (low complexity). Over residues 186–196 (EPQQAQRTPPN) the composition is skewed to polar residues. The span at 197–230 (SLAAAGLGLSSAVLTPNTPSMQQQQQQTMTSTTN) shows a compositional bias: low complexity. The 75-residue stretch at 257–331 (EETTDLEELE…LLQKWLEDAD (75 aa)) folds into the POU-specific domain. The homeobox DNA-binding region spans 362–421 (RRKKRTSIETTIRGALEQAFVLNCKPTSEEINQLSERLHMDKEVVRVWFCNRRQKEKRIN).

Belongs to the POU transcription factor family. Class-2 subfamily.

The protein resides in the nucleus. DNA-binding regulatory protein implicated in early development. Involved in neuronal cell fate decision. May act as an octamer-dependent activator of transcription. In Drosophila virilis (Fruit fly), this protein is POU domain protein 2 (pdm2).